Here is a 259-residue protein sequence, read N- to C-terminus: Tryptophan synthase alpha chain (259 aa).

Residues glutamate 35 and aspartate 46 each act as proton acceptor in the active site.

This sequence belongs to the TrpA family. As to quaternary structure, tetramer of two alpha and two beta chains.

It carries out the reaction (1S,2R)-1-C-(indol-3-yl)glycerol 3-phosphate + L-serine = D-glyceraldehyde 3-phosphate + L-tryptophan + H2O. Its pathway is amino-acid biosynthesis; L-tryptophan biosynthesis; L-tryptophan from chorismate: step 5/5. Functionally, the alpha subunit is responsible for the aldol cleavage of indoleglycerol phosphate to indole and glyceraldehyde 3-phosphate. The polypeptide is Tryptophan synthase alpha chain (Methanococcus vannielii (strain ATCC 35089 / DSM 1224 / JCM 13029 / OCM 148 / SB)).